The primary structure comprises 382 residues: Glutamyl-tRNA reductase (382 aa).

Residues 38–41 (TCNR), serine 85, 90–92 (ENQ), and glutamine 96 each bind substrate. Cysteine 39 (nucleophile) is an active-site residue. 164–169 (GAGEMG) provides a ligand contact to NADP(+).

The protein belongs to the glutamyl-tRNA reductase family. Homodimer.

The enzyme catalyses (S)-4-amino-5-oxopentanoate + tRNA(Glu) + NADP(+) = L-glutamyl-tRNA(Glu) + NADPH + H(+). The protein operates within porphyrin-containing compound metabolism; protoporphyrin-IX biosynthesis; 5-aminolevulinate from L-glutamyl-tRNA(Glu): step 1/2. In terms of biological role, catalyzes the NADPH-dependent reduction of glutamyl-tRNA(Glu) to glutamate 1-semialdehyde (GSA). The sequence is that of Glutamyl-tRNA reductase from Methanococcus maripaludis (strain C6 / ATCC BAA-1332).